A 62-amino-acid chain; its full sequence is Small, acid-soluble spore protein A (62 aa).

The protein belongs to the alpha/beta-type SASP family.

SASP are bound to spore DNA. They are double-stranded DNA-binding proteins that cause DNA to change to an a-like conformation. They protect the DNA backbone from chemical and enzymatic cleavage and are thus involved in dormant spore's high resistance to UV light. The chain is Small, acid-soluble spore protein A (sasP-A) from Priestia megaterium (Bacillus megaterium).